The sequence spans 526 residues: Bifunctional purine biosynthesis protein PurH (526 aa).

One can recognise an MGS-like domain in the interval 1–145 (MSKAPLALLS…KNHAHVGIVT (145 aa)).

This sequence belongs to the PurH family.

It catalyses the reaction (6R)-10-formyltetrahydrofolate + 5-amino-1-(5-phospho-beta-D-ribosyl)imidazole-4-carboxamide = 5-formamido-1-(5-phospho-D-ribosyl)imidazole-4-carboxamide + (6S)-5,6,7,8-tetrahydrofolate. It carries out the reaction IMP + H2O = 5-formamido-1-(5-phospho-D-ribosyl)imidazole-4-carboxamide. The protein operates within purine metabolism; IMP biosynthesis via de novo pathway; 5-formamido-1-(5-phospho-D-ribosyl)imidazole-4-carboxamide from 5-amino-1-(5-phospho-D-ribosyl)imidazole-4-carboxamide (10-formyl THF route): step 1/1. It participates in purine metabolism; IMP biosynthesis via de novo pathway; IMP from 5-formamido-1-(5-phospho-D-ribosyl)imidazole-4-carboxamide: step 1/1. This chain is Bifunctional purine biosynthesis protein PurH, found in Psychrobacter arcticus (strain DSM 17307 / VKM B-2377 / 273-4).